Consider the following 632-residue polypeptide: tRNA uridine 5-carboxymethylaminomethyl modification enzyme MnmG (632 aa).

FAD is bound by residues 15–20, V127, and S182; that span reads GAGHAG. 276–290 serves as a coordination point for NAD(+); sequence GARYCPSIEDKIVRF. Q373 lines the FAD pocket.

Belongs to the MnmG family. As to quaternary structure, homodimer. Heterotetramer of two MnmE and two MnmG subunits. FAD is required as a cofactor.

Its subcellular location is the cytoplasm. Its function is as follows. NAD-binding protein involved in the addition of a carboxymethylaminomethyl (cmnm) group at the wobble position (U34) of certain tRNAs, forming tRNA-cmnm(5)s(2)U34. This Enterococcus faecalis (strain ATCC 700802 / V583) protein is tRNA uridine 5-carboxymethylaminomethyl modification enzyme MnmG.